The following is an 81-amino-acid chain: Dermaseptin-B2 (81 aa).

Positions 1–22 are cleaved as a signal peptide; the sequence is MAFLKKSLFLVLFLGLVSLSIC. Positions 23 to 43 are excised as a propeptide; it reads EEEKRENEDEEEQEDDEQSEM. The segment at 24–46 is disordered; that stretch reads EEKRENEDEEEQEDDEQSEMKRG. Positions 30–40 are enriched in acidic residues; it reads EDEEEQEDDEQ. A hinge region that separates the two alpha-helices that constitute the peptide region spans residues 54–55; it reads VG. At Val78 the chain carries Valine amide. A propeptide spanning residues 80–81 is cleaved from the precursor; sequence EQ.

In terms of processing, amidation permits an increased antimicrobial activity against some microorganisms such as T.album and S.cerevisiae. Post-translationally, may contain a D-amino acid residue, since the natural peptide is not identical in chromatographic properties to the synthetic peptide. Expressed by the skin glands.

It localises to the secreted. The protein resides in the target cell membrane. Its function is as follows. Cationic amphipathic alpha-helical antimicrobial peptide with potent activity against Gram-negative and Gram-positive bacteria, fungi and protozoa. Acts in a synergistic effect in combination with Plasticin-B1 at doses that are not active alone. Acts by disturbing membrane functions. On model membranes, induces a strong perturbation of anionic lipid bilayers, resides at the hydrocarbon core-water interface, parallel to the plane of the membrane, and interacts preferentially with the polar head groups and glycerol backbone region of the anionic phospholipids, as well as the region of the lipid acyl chain near the bilayer surface. Induces a positive curvature of the bilayer and clustering of anionic lipids, consistent with a carpet mechanism, that may lead to the formation of mixed peptide-phospholipid toroidal, transient pores and membrane permeation/disruption once a threshold peptide accumulation is reached. Also enhances binding of agonists to adenosine A1 receptors (ADORA1), adenosine A2a receptors (ADORA2A), alpha-2 adrenergic receptors (ADRA2A) and 5-hydroxytryptamine 1A receptors (HTR1A). In addition, it enhances guanyl nucleotide exchange which may result in the conversion of receptors to a high affinity state complexed with guanyl nucleotide free G-protein. Affects human behavior eliciting profound malaise, followed by listlessness and then euphoria. Does not show cytotoxic activity on CHO cells. Does not act as a chemoattractant. Does not show hemolytic activity. The protein is Dermaseptin-B2 (ADR) of Phyllomedusa bicolor (Two-colored leaf frog).